The primary structure comprises 239 residues: Orotidine 5'-phosphate decarboxylase (239 aa).

Residues D15, K37, 64–73, T126, R187, Q196, G216, and R217 each bind substrate; that span reads DLKYHDIPNT. K66 functions as the Proton donor in the catalytic mechanism.

This sequence belongs to the OMP decarboxylase family. Type 1 subfamily. In terms of assembly, homodimer.

It carries out the reaction orotidine 5'-phosphate + H(+) = UMP + CO2. The protein operates within pyrimidine metabolism; UMP biosynthesis via de novo pathway; UMP from orotate: step 2/2. Functionally, catalyzes the decarboxylation of orotidine 5'-monophosphate (OMP) to uridine 5'-monophosphate (UMP). The protein is Orotidine 5'-phosphate decarboxylase of Geotalea daltonii (strain DSM 22248 / JCM 15807 / FRC-32) (Geobacter daltonii).